The primary structure comprises 343 residues: Glucokinase (343 aa).

Residue 18 to 23 (GDIGGT) coordinates ATP.

It belongs to the bacterial glucokinase family.

It localises to the cytoplasm. It catalyses the reaction D-glucose + ATP = D-glucose 6-phosphate + ADP + H(+). The sequence is that of Glucokinase from Brucella suis biovar 1 (strain 1330).